A 579-amino-acid polypeptide reads, in one-letter code: MFS-type transporter ppz2 (579 aa).

The disordered stretch occupies residues 1-23 (MQTATALEDSANAPSPAASSQGQ). The span at 10–20 (SANAPSPAASS) shows a compositional bias: low complexity. The N-linked (GlcNAc...) asparagine glycan is linked to Asn38. 14 helical membrane-spanning segments follow: residues 48 to 68 (ALIMVALCCAVFLHALDNTII), 83 to 103 (AAYTWIGSTYLLAVAASTMVW), 121 to 141 (LCFFTGSLIAALSANFAMLIA), 145 to 165 (IQGIGGAGVNVLANICVGDLF), 171 to 191 (GLYYGVIGGVWAVALSLGPVV), 203 to 223 (WCFYINLPLCAVVFVIIILLL), 236 to 256 (IAAIDWVGAALSIGSTLMILL), 269 to 289 (SATVICLVVFGFIGWILCFSW), 298 to 318 (LLPVSIFKQIPTLAVLAACFI), 336 to 356 (AVLGATPILSGVYLLPTAVSI), 374 to 394 (LTPIYIGFVLQTLGYGLFIDL), 403 to 423 (IIVFQIIGGLGVGFNFQAPMV), 438 to 460 (TSAYNFMRNVSGAISVVIGQTVF), and 516 to 536 (SMWIMYTAFSAAALVVCPFLG).

This sequence belongs to the major facilitator superfamily. TCR/Tet family.

The protein localises to the membrane. MFS-type transporter; part of the gene cluster that mediates the biosynthesis of pyrrolopyrazines, secondary metabolites showing insecticidal activity. Probably involved in the secretion of peramine and other pyrrolopyrazines. The chain is MFS-type transporter ppz2 from Metarhizium majus (strain ARSEF 297).